The chain runs to 698 residues: Epithelial sodium channel subunit alpha (698 aa).

The tract at residues 1–70 is disordered; the sequence is MLDHTRAPEL…SAPRQPTEEE (70 aa). Over 1–110 the chain is Cytoplasmic; the sequence is MLDHTRAPEL…CSKHNRMKTA (110 aa). The helical transmembrane segment at 111–131 threads the bilayer; the sequence is FWAVLWLCTFGMMYWQFALLF. Topologically, residues 132–589 are extracellular; it reads EEYLSYPVSL…SQWSLWFGSS (458 aa). 3 disulfide bridges follow: C158–C332, C256–C263, and C309–C316. N190 carries an N-linked (GlcNAc...) asparagine glycan. A gating release of inhibition by proteolysis (GRIP); protease-sensitive region that is responsible for the proteolytic activation of the channel region spans residues 200-270; it reads RRRSSRDLLG…SDCFYQTYSS (71 aa). The segment at 213–243 is disordered; sequence HPLQRLRTPPPPYSGRTARSGSSSVRDNNPQ. Polar residues predominate over residues 229–243; it reads TARSGSSSVRDNNPQ. N-linked (GlcNAc...) asparagine glycosylation is present at N259. 3 N-linked (GlcNAc...) asparagine glycosylation sites follow: N320, N339, and N424. Cystine bridges form between C421/C506, C443/C483, C443/C502, C447/C498, C456/C483, C456/C506, and C458/C472. An N-linked (GlcNAc...) asparagine glycan is attached at N538. The chain crosses the membrane as a helical span at residues 590-610; the sequence is VLSVVEMAELIFDLLVITLLM. Residues 611-698 are Cytoplasmic-facing; that stretch reads LLRRFRSRYW…DCSACALAAL (88 aa). Residues 637 to 663 are disordered; sequence ASSFPSRFCPHPTSPPPSLPQQGMTPP. The PY motif; recruits WW domain-containing proteins and is thereby required for ubiquitination and inhibition of the channel by NEDD4 and NEDD4L signature appears at 669–673; sequence PPPAY.

It belongs to the amiloride-sensitive sodium channel (TC 1.A.6) family. SCNN1A subfamily. As to quaternary structure, heterotrimer; containing an alpha/SCNN1A, a beta/SCNN1B and a gamma/SCNN1G subunit. Interacts with WWP1 (via WW domains). Interacts with WWP2 (via WW domains); inhibits the channel. Interacts with BPIFA1; the interaction is indirect via SCNN1B and inhibits the proteolytic processing of SCNN1A and SCNN1G and the activation of ENaC. Interacts with the full-length immature form of PCSK9 (pro-PCSK9). In terms of processing, ubiquitinated. Can be ubiquitinated at multiple sites and undergo monoubiquitination and polyubiquitination. Ubiquitination by NEDD4 or NEDD4L inhibits the ENaC channel through endocytosis, intracellular retention and degradation of its individual subunits. Post-translationally, N-glycosylated. ENaC is activated through the proteolytic maturation of its subunits. Furin cleaves the SCNN1A subunit, which results in a stepwise increase in the open probability of the channel due to the release of an inhibitory tract. BPIFA1, which is recruited by the SCNN1B subunit, prevents the proteolytic activation of ENaC. Detected in kidney, lung and testis (at protein level). In the testis, detected within the seminiferous tubules but not in the interstitial cells (at protein level).

The protein resides in the apical cell membrane. The protein localises to the cell projection. Its subcellular location is the cilium. It is found in the cytoplasmic granule. It localises to the cytoplasm. The protein resides in the cytoplasmic vesicle. The protein localises to the secretory vesicle. Its subcellular location is the acrosome. It is found in the flagellum. It catalyses the reaction Na(+)(in) = Na(+)(out). Originally identified and characterized by its inhibition by the diuretic drug amiloride. Functionally, this is one of the three pore-forming subunits of the heterotrimeric epithelial sodium channel (ENaC), a critical regulator of sodium balance and fluid homeostasis. ENaC operates in epithelial tissues, where it mediates the electrodiffusion of sodium ions from extracellular fluid through the apical membrane of cells, with water following osmotically. It plays a key role in maintaining sodium homeostasis through electrogenic sodium reabsorption in the kidneys. Additionally, ENaC is essential for airway surface liquid homeostasis, which is crucial for proper mucus clearance. The sequence is that of Epithelial sodium channel subunit alpha from Rattus norvegicus (Rat).